A 161-amino-acid chain; its full sequence is Small ribosomal subunit protein uS9 (161 aa).

The protein belongs to the universal ribosomal protein uS9 family.

The polypeptide is Small ribosomal subunit protein uS9 (Rickettsia typhi (strain ATCC VR-144 / Wilmington)).